We begin with the raw amino-acid sequence, 97 residues long: Lipolysis-activating peptide 1-alpha chain (97 aa).

An N-terminal signal peptide occupies residues 1–21; the sequence is MNIMLFCSVFILVSLTGLSVS. An LCN-type CS-alpha/beta domain is found at 25–88; sequence PGNYPMSLYG…FWAAHKNHCK (64 aa). Cystine bridges form between Cys39/Cys62, Cys48/Cys67, and Cys52/Cys69.

The protein belongs to the long (3 C-C) scorpion toxin superfamily. Monomer (edited version) and heterodimer (non-edited version) of this alpha chain and a beta chain (AC P0CI43). As to expression, expressed by the venom gland.

The protein localises to the secreted. In terms of biological role, the heterodimer non-edited LVP1 induces lipolysis in rat adipocytes. Induction of lipolysis by LVP1 appears to be mediated through the beta-2 adrenergic receptor pathway (ADRB2). The edited BmKBTx-like, similar to beta-toxins, may modulate voltage-gated sodium channels (Nav) and may block voltage-gated potassium channels (Kv). The polypeptide is Lipolysis-activating peptide 1-alpha chain (Lychas mucronatus (Chinese swimming scorpion)).